The sequence spans 178 residues: Large ribosomal subunit protein bL25 (178 aa).

It belongs to the bacterial ribosomal protein bL25 family. CTC subfamily. In terms of assembly, part of the 50S ribosomal subunit; part of the 5S rRNA/L5/L18/L25 subcomplex. Contacts the 5S rRNA. Binds to the 5S rRNA independently of L5 and L18.

Functionally, this is one of the proteins that binds to the 5S RNA in the ribosome where it forms part of the central protuberance. The sequence is that of Large ribosomal subunit protein bL25 from Helicobacter pylori (strain G27).